The following is an 85-amino-acid chain: Beta-insect depressant toxin Lqh-dprIT3f (85 aa).

The signal sequence occupies residues 1-21 (MKLLLLLTISASMLIEGLVNA). The region spanning 22–82 (DGYIRGGDGC…EWDYETDTCG (61 aa)) is the LCN-type CS-alpha/beta domain. 4 disulfide bridges follow: Cys31–Cys81, Cys35–Cys56, Cys42–Cys63, and Cys46–Cys65. Gly82 carries the glycine amide modification.

It belongs to the long (4 C-C) scorpion toxin superfamily. Sodium channel inhibitor family. Beta subfamily. In terms of tissue distribution, expressed by the venom gland.

The protein localises to the secreted. Functionally, depressant insect beta-toxins cause a transient contraction paralysis followed by a slow flaccid paralysis. They bind voltage-independently at site-4 of sodium channels (Nav) and block action potentials, primarily by depolarizing the axonal membrane and suppressing the sodium current. This depressant toxin is active only on insects. It is found in a relatively small amount in the venom. The sequence is that of Beta-insect depressant toxin Lqh-dprIT3f from Leiurus hebraeus (Hebrew deathstalker scorpion).